A 421-amino-acid chain; its full sequence is Serine--tRNA ligase (421 aa).

225-227 (TAE) is an L-serine binding site. ATP is bound by residues 256-258 (RSE) and Val272. Glu279 serves as a coordination point for L-serine. 345–348 (ETHS) contributes to the ATP binding site. Thr380 provides a ligand contact to L-serine.

It belongs to the class-II aminoacyl-tRNA synthetase family. Type-1 seryl-tRNA synthetase subfamily. Homodimer. The tRNA molecule binds across the dimer.

It is found in the cytoplasm. It carries out the reaction tRNA(Ser) + L-serine + ATP = L-seryl-tRNA(Ser) + AMP + diphosphate + H(+). It catalyses the reaction tRNA(Sec) + L-serine + ATP = L-seryl-tRNA(Sec) + AMP + diphosphate + H(+). It functions in the pathway aminoacyl-tRNA biosynthesis; selenocysteinyl-tRNA(Sec) biosynthesis; L-seryl-tRNA(Sec) from L-serine and tRNA(Sec): step 1/1. In terms of biological role, catalyzes the attachment of serine to tRNA(Ser). Is also able to aminoacylate tRNA(Sec) with serine, to form the misacylated tRNA L-seryl-tRNA(Sec), which will be further converted into selenocysteinyl-tRNA(Sec). The sequence is that of Serine--tRNA ligase from Thermus thermophilus (strain ATCC 27634 / DSM 579 / HB8).